Here is a 178-residue protein sequence, read N- to C-terminus: Probable DNA-directed RNA polymerase subunit delta (178 aa).

In terms of domain architecture, HTH HARE-type spans 14-81; it reads KSFIDMAYTL…GENLWGLRDW (68 aa). The tract at residues 114–178 is disordered; sequence LGDDDADEDD…AFEDAEDFND (65 aa). A compositionally biased stretch (acidic residues) spans 116-178; it reads DDDADEDDDI…AFEDAEDFND (63 aa).

This sequence belongs to the RpoE family. RNAP is composed of a core of 2 alpha, a beta and a beta' subunits. The core is associated with a delta subunit and one of several sigma factors.

Participates in both the initiation and recycling phases of transcription. In the presence of the delta subunit, RNAP displays an increased specificity of transcription, a decreased affinity for nucleic acids, and an increased efficiency of RNA synthesis because of enhanced recycling. The polypeptide is Probable DNA-directed RNA polymerase subunit delta (Staphylococcus epidermidis (strain ATCC 35984 / DSM 28319 / BCRC 17069 / CCUG 31568 / BM 3577 / RP62A)).